The sequence spans 558 residues: Phosphatidylserine lipase ABHD16A (558 aa).

Transmembrane regions (helical) follow at residues 60–80 and 93–113; these read ILAL…FAFF and VVPF…VACL. Residues 114–558 are Cytoplasmic-facing; the sequence is RGIGRWTNPQ…AQHFQMPWCL (445 aa). The AB hydrolase-1 domain occupies 281–407; that stretch reads LVICCEGNAG…LVTRTVRQHL (127 aa). Active-site charge relay system residues include S355, D430, and H507.

The protein belongs to the AB hydrolase superfamily. ABHD16 family.

Its subcellular location is the membrane. The catalysed reaction is 1-heptadecanoyl-2-(5Z,8Z,11Z,14Z-eicosatetraenoyl)-sn-glycero-3-phosphoserine + H2O = 1-heptadecanoyl-sn-glycero-3-phosphoserine + (5Z,8Z,11Z,14Z)-eicosatetraenoate + H(+). It catalyses the reaction 1-hexadecanoyl-2-(9Z-octadecenoyl)-sn-glycero-3-phospho-L-serine + H2O = 1-hexadecanoyl-sn-glycero-3-phospho-L-serine + (9Z)-octadecenoate + H(+). It carries out the reaction 1-octadecanoyl-2-(9Z,12Z-octadecadienoyl)-sn-glycero-3-phosphoserine + H2O = 1-octadecanoyl-sn-glycero-3-phosphoserine + (9Z,12Z)-octadecadienoate + H(+). The enzyme catalyses 1-heptadecanoyl-2-(5Z,8Z,11Z,14Z-eicosatetraenoyl)-sn-glycero-3-phosphocholine + H2O = 1-heptadecanoyl-sn-glycero-3-phosphocholine + (5Z,8Z,11Z,14Z)-eicosatetraenoate + H(+). The catalysed reaction is 1-hexadecanoyl-2-(9Z-octadecenoyl)-sn-glycero-3-phosphoglycerol + H2O = 1-hexadecanoyl-sn-glycero-3-phosphoglycerol + (9Z)-octadecenoate + H(+). It catalyses the reaction 1-hexadecanoyl-2-(9Z-octadecenoyl)-sn-glycero-3-phospho-(1D-myo-inositol) + H2O = 1-hexadecanoyl-sn-glycero-3-phospho-(1D-myo-inositol) + (9Z)-octadecenoate + H(+). It carries out the reaction 1-heptadecanoyl-2-(5Z,8Z,11Z,14Z-eicosatetraenoyl)-sn-glycero-3-phosphoethanolamine + H2O = 1-heptadecanoyl-sn-glycero-3-phosphoethanolamine + (5Z,8Z,11Z,14Z)-eicosatetraenoate + H(+). The enzyme catalyses 1-hexadecanoyl-2-(9Z-octadecenoyl)-sn-glycero-3-phospho-(1'-sn-glycerol) + H2O = 1-hexadecanoyl-sn-glycero-3-phospho-(1'-sn-glycerol) + (9Z)-octadecenoate + H(+). The catalysed reaction is Hydrolyzes glycerol monoesters of long-chain fatty acids.. It catalyses the reaction 1-tetradecanoylglycerol + H2O = tetradecanoate + glycerol + H(+). It carries out the reaction 2-hexadecanoylglycerol + H2O = glycerol + hexadecanoate + H(+). The enzyme catalyses 1-(9Z-octadecenoyl)-glycerol + H2O = glycerol + (9Z)-octadecenoate + H(+). The catalysed reaction is 2-(9Z-octadecenoyl)-glycerol + H2O = glycerol + (9Z)-octadecenoate + H(+). It catalyses the reaction 2-(9Z,12Z-octadecadienoyl)-glycerol + H2O = (9Z,12Z)-octadecadienoate + glycerol + H(+). It carries out the reaction 1-(5Z,8Z,11Z,14Z-eicosatetraenoyl)-glycerol + H2O = glycerol + (5Z,8Z,11Z,14Z)-eicosatetraenoate + H(+). The enzyme catalyses 2-(5Z,8Z,11Z,14Z-eicosatetraenoyl)-glycerol + H2O = glycerol + (5Z,8Z,11Z,14Z)-eicosatetraenoate + H(+). The catalysed reaction is prostaglandin D2-1-glycerol ester + H2O = prostaglandin D2 + glycerol + H(+). It catalyses the reaction 2-glyceryl-15-deoxy-Delta(12,14)-prostaglandin J2 + H2O = 15-deoxy-Delta(12,14)-prostaglandin J2 + glycerol + H(+). It carries out the reaction 1-(9Z,12Z-octadecadienoyl)-glycerol + H2O = (9Z,12Z)-octadecadienoate + glycerol + H(+). Its function is as follows. Phosphatidylserine (PS) lipase that mediates the hydrolysis of phosphatidylserine to generate lysophosphatidylserine (LPS). LPS constitutes a class of signaling lipids that regulates immunological and neurological processes. Has no activity towards diacylglycerol, triacylglycerol or lysophosphatidylserine lipase. Also has monoacylglycerol lipase activity, with preference for 1-(9Z,12Z-octadecadienoyl)-glycerol (1-LG) and 2-glyceryl-15-deoxy-Delta(12,14)-prostaglandin J2 (15d-PGJ(2)-G). This Rattus norvegicus (Rat) protein is Phosphatidylserine lipase ABHD16A.